A 152-amino-acid polypeptide reads, in one-letter code: Small ribosomal subunit protein uS8m (152 aa).

Belongs to the universal ribosomal protein uS8 family.

Its subcellular location is the mitochondrion. This Marchantia polymorpha (Common liverwort) protein is Small ribosomal subunit protein uS8m (RPS8).